The sequence spans 80 residues: Metallothionein-like protein type 2, MT2-28 (80 aa).

The protein belongs to the metallothionein superfamily. Type 15 family.

Its function is as follows. Metallothioneins have a high content of cysteine residues that bind various heavy metals. The protein is Metallothionein-like protein type 2, MT2-28 of Brassica juncea (Indian mustard).